We begin with the raw amino-acid sequence, 491 residues long: LETM1 domain-containing protein LETM2, mitochondrial (491 aa).

A mitochondrion-targeting transit peptide spans 1-25 (MAFYSYNSVLAIARTRFPSHFVHPT). Residues 26-177 (CSSYSPSCAF…LLRTCVDFFR (152 aa)) are Mitochondrial intermembrane-facing. Residues 94–109 (EQATKHPQVTSPQATK) are compositionally biased toward polar residues. A disordered region spans residues 94-115 (EQATKHPQVTSPQATKETGMEI). A helical membrane pass occupies residues 178–198 (LVPFMVFLIVPFMEFLLPVFL). Residues 199–491 (KLFPEMLPST…QNSKASSKGA (293 aa)) lie on the Mitochondrial matrix side of the membrane. Residues 208-235 (TFESESKKEEKQKKKMAVKLELAKFLQE) adopt a coiled-coil conformation. The 218-residue stretch at 221–438 (KKMAVKLELA…LAPQLKGTKD (218 aa)) folds into the Letm1 RBD domain. Residues 435-491 (GTKDEDFIQPPPVTSSPITPSTPISLPKGPITSSEEPTLQAKSQMTAQNSKASSKGA) are disordered. Low complexity predominate over residues 449 to 461 (SSPITPSTPISLP). Over residues 465-491 (ITSSEEPTLQAKSQMTAQNSKASSKGA) the composition is skewed to polar residues.

It is found in the mitochondrion inner membrane. This is LETM1 domain-containing protein LETM2, mitochondrial (LETM2) from Homo sapiens (Human).